Consider the following 152-residue polypeptide: SsrA-binding protein (152 aa).

This sequence belongs to the SmpB family.

Its subcellular location is the cytoplasm. Required for rescue of stalled ribosomes mediated by trans-translation. Binds to transfer-messenger RNA (tmRNA), required for stable association of tmRNA with ribosomes. tmRNA and SmpB together mimic tRNA shape, replacing the anticodon stem-loop with SmpB. tmRNA is encoded by the ssrA gene; the 2 termini fold to resemble tRNA(Ala) and it encodes a 'tag peptide', a short internal open reading frame. During trans-translation Ala-aminoacylated tmRNA acts like a tRNA, entering the A-site of stalled ribosomes, displacing the stalled mRNA. The ribosome then switches to translate the ORF on the tmRNA; the nascent peptide is terminated with the 'tag peptide' encoded by the tmRNA and targeted for degradation. The ribosome is freed to recommence translation, which seems to be the essential function of trans-translation. The chain is SsrA-binding protein from Helicobacter pylori (strain Shi470).